Consider the following 876-residue polypeptide: MSKSTAEIRQAFLDFFHSKGHQVVASSSLVPNNDPTLLFTNAGMNQFKDVFLGLDKRNYSRATTSQRCVRAGGKHNDLENVGYTARHHTFFEMLGNFSFGDYFKHDAIQFAWELLTGENWFALPKERLWVTVYETDDEAYEIWEKEVGIPRERIIRIGDNKGAPYASDNFWQMGDTGPCGPCTEIFYDHGDHIWGGPPGSPEEDGDRYIEIWNIVFMQFNRQADGTMEPLPKPSVDTGMGLERIAAVLQHVNSNYDIDLFRTLIEAVAKVTGATDLGNKSLRVIADHIRSCAFLVADGVLPSNENRGYVLRRIIRRAVRHGNMLGAKETFFYKLVGPLIEVMGSAGEELKRQQAQVEQVLKTEEEQFARTLERGLALLDEELAKLQGDTLDGETAFRLYDTYGFPVDLTADVCRERNIKVDEAGFEAAMEEQRRRAREASGFGADYNAMIRVDSASEFKGYDHLELNGKVTALFVDGKAVEAINAGQEAVVVLDQTPFYAESGGQVGDKGELKGAGFTFAVDDTQKYGQAIGHLGKLSAGALKVGDAVQADVDEARRARIRLNHSATHLMHAALRQVLGTHVAQKGSLVSDKVLRFDFSHNEAMKPSEIREVEDLVNAQIRRNLPIETNIMDLDAAKAKGAMALFGEKYDERVRVLSMGDFSTELCGGTHASRTGDIGLFRIISESGTAAGIRRIEAVTGEGAMATVHAQSDRLNDIAHLLKGDSQNLGDKVRAVLERTRQLEKELQQLKDQAAAQESANLSSKAVDLNGVKLLVSELAGIEPKMLRTMVDDLKNQLGSTVIVLATVVEGKVSLIAGVSKDVTDRVKAGELIGMVAQQVGGKGGGRPDMAQAGGTDAAALPAALASVQGWVSAKLQ.

Zn(2+) is bound by residues His564, His568, Cys666, and His670.

The protein belongs to the class-II aminoacyl-tRNA synthetase family. As to quaternary structure, homotetramer. It depends on Zn(2+) as a cofactor.

Its subcellular location is the cytoplasm. It carries out the reaction tRNA(Ala) + L-alanine + ATP = L-alanyl-tRNA(Ala) + AMP + diphosphate. Its function is as follows. Catalyzes the attachment of alanine to tRNA(Ala) in a two-step reaction: alanine is first activated by ATP to form Ala-AMP and then transferred to the acceptor end of tRNA(Ala). Also edits incorrectly charged Ser-tRNA(Ala) and Gly-tRNA(Ala) via its editing domain. This is Alanine--tRNA ligase from Salmonella typhimurium (strain LT2 / SGSC1412 / ATCC 700720).